Reading from the N-terminus, the 86-residue chain is Small ribosomal subunit protein bS16 (86 aa).

The protein belongs to the bacterial ribosomal protein bS16 family.

The chain is Small ribosomal subunit protein bS16 from Stenotrophomonas maltophilia (strain K279a).